Reading from the N-terminus, the 529-residue chain is Bifunctional purine biosynthesis protein PurH (529 aa).

One can recognise an MGS-like domain in the interval 1 to 148 (MQQRRPVRRA…KNHKDVAIVV (148 aa)).

This sequence belongs to the PurH family.

The enzyme catalyses (6R)-10-formyltetrahydrofolate + 5-amino-1-(5-phospho-beta-D-ribosyl)imidazole-4-carboxamide = 5-formamido-1-(5-phospho-D-ribosyl)imidazole-4-carboxamide + (6S)-5,6,7,8-tetrahydrofolate. The catalysed reaction is IMP + H2O = 5-formamido-1-(5-phospho-D-ribosyl)imidazole-4-carboxamide. It participates in purine metabolism; IMP biosynthesis via de novo pathway; 5-formamido-1-(5-phospho-D-ribosyl)imidazole-4-carboxamide from 5-amino-1-(5-phospho-D-ribosyl)imidazole-4-carboxamide (10-formyl THF route): step 1/1. Its pathway is purine metabolism; IMP biosynthesis via de novo pathway; IMP from 5-formamido-1-(5-phospho-D-ribosyl)imidazole-4-carboxamide: step 1/1. In Salmonella schwarzengrund (strain CVM19633), this protein is Bifunctional purine biosynthesis protein PurH.